Here is a 98-residue protein sequence, read N- to C-terminus: uncharacterized protein (98 aa).

This is an uncharacterized protein from Rickettsia prowazekii (strain Madrid E).